The sequence spans 438 residues: MRMPSAISIGVFAGLSLAASAVPSLRKNGTTCTVIPLGNGQDDVPNILSAVDECGQTSGGRVVLPAPYTYRINQRMTTHLTDSRLEIGGTLLFSDDIDYWVNNSYRVDFQNQSSAWRITGHDYVVDGGPHRGGVDGNGQLWYTWAKGGSNVFGRPMPVHVFESTRATLRNLAIRQPQFWAVLVDSSSHINLDNFYVNATNHDSSVSPEGEWVQNTDGIDTYRSDHITITNWVYQGGDDAVAFKGNSTNIHVENVTVYGGPGIAFGSLGQYPDRTDIVENVTVRNVRVQPSFQRAMNSGVYFKSWIGVNYGVPPNGGGGGHGYVRNVSVENLRLKDVQLPVYIDTCLSYLFSENITQYCDTSTYEFEDLHFRNISGNGLATVTDYPGKNISFAVALLCSEKAPCTDLTFQDISITLPGNYTGKHVLCENAEVEGLPCNS.

Residues 1 to 21 (MRMPSAISIGVFAGLSLAASA) form the signal peptide. Asn-28, Asn-102, Asn-111, and Asn-197 each carry an N-linked (GlcNAc...) asparagine glycan. 2 PbH1 repeats span residues 186 to 222 (SSHINLDNFYVNATNHDSSVSPEGEWVQNTDGIDTYR) and 223 to 244 (SDHITITNWVYQGGDDAVAFKG). The Proton donor role is filled by Asp-237. N-linked (GlcNAc...) asparagine glycosylation is found at Asn-245, Asn-253, Asn-279, Asn-325, Asn-353, Asn-372, and Asn-388. 3 PbH1 repeats span residues 246–266 (STNIHVENVTVYGGPGIAFGS), 277–303 (VENVTVRNVRVQPSFQRAMNSGVYFKS), and 323–344 (VRNVSVENLRLKDVQLPVYIDT). A disulfide bridge connects residues Cys-397 and Cys-403. Residue Asn-418 is glycosylated (N-linked (GlcNAc...) asparagine).

It belongs to the glycosyl hydrolase 28 family.

The protein resides in the secreted. It carries out the reaction [(1-&gt;4)-alpha-D-galacturonosyl](n) + H2O = alpha-D-galacturonate + [(1-&gt;4)-alpha-D-galacturonosyl](n-1). Its function is as follows. Specific in hydrolyzing the terminal glycosidic bond of polygalacturonic acid and oligogalacturonates. The sequence is that of Putative galacturan 1,4-alpha-galacturonidase A (rgxA) from Aspergillus niger.